The following is a 127-amino-acid chain: Protein SPIRAL1-like 4 (127 aa).

A disordered region spans residues 1–127 (MGKARGVNSG…FGSGPCGSDK (127 aa)). Over residues 39-48 (TTTTTTTTTT) the composition is skewed to low complexity. Phosphoserine is present on S80. Polar residues predominate over residues 80-94 (SPNNYYRSDGQNCGN).

Belongs to the SPIRAL1 family. Ubiquitous.

Acts redundantly with SPR1 in maintaining the cortical microtubules organization essential for anisotropic cell growth. This Arabidopsis thaliana (Mouse-ear cress) protein is Protein SPIRAL1-like 4 (SP1L4).